The sequence spans 355 residues: Cyanide hydratase (355 aa).

The CN hydrolase domain occupies 6–286 (YKAAAVTSEP…GLLFVDIDLN (281 aa)). Catalysis depends on Glu46, which acts as the Proton acceptor. The active site involves Lys128. Cys163 functions as the Nucleophile in the catalytic mechanism.

It belongs to the carbon-nitrogen hydrolase superfamily. Nitrilase family. In terms of assembly, oligomer of dimers, forming left-handed helical fibers.

It catalyses the reaction formamide = hydrogen cyanide + H2O. Its function is as follows. Catalyzes the hydration of cyanide to formamide. Degradation of cyanide may be important for plant pathogenic fungi in infection of cyanogenic plants. Also has low but significant nitrilase activity with acetonitrile, propionitrile and benzonitrile. The polypeptide is Cyanide hydratase (Gibberella baccata (Fusarium lateritium)).